The sequence spans 141 residues: Nucleoside diphosphate kinase (141 aa).

ATP-binding residues include K9, F57, R85, T91, R102, and N112. H115 serves as the catalytic Pros-phosphohistidine intermediate.

Belongs to the NDK family. As to quaternary structure, homotetramer. Mg(2+) is required as a cofactor.

It localises to the cytoplasm. The enzyme catalyses a 2'-deoxyribonucleoside 5'-diphosphate + ATP = a 2'-deoxyribonucleoside 5'-triphosphate + ADP. The catalysed reaction is a ribonucleoside 5'-diphosphate + ATP = a ribonucleoside 5'-triphosphate + ADP. Functionally, major role in the synthesis of nucleoside triphosphates other than ATP. The ATP gamma phosphate is transferred to the NDP beta phosphate via a ping-pong mechanism, using a phosphorylated active-site intermediate. The sequence is that of Nucleoside diphosphate kinase from Chlamydia muridarum (strain MoPn / Nigg).